A 1073-amino-acid chain; its full sequence is DNA-directed RNA polymerase subunit beta (1073 aa).

Belongs to the RNA polymerase beta chain family. In terms of assembly, in plastids the minimal PEP RNA polymerase catalytic core is composed of four subunits: alpha, beta, beta', and beta''. When a (nuclear-encoded) sigma factor is associated with the core the holoenzyme is formed, which can initiate transcription.

The protein resides in the plastid. It localises to the chloroplast. The catalysed reaction is RNA(n) + a ribonucleoside 5'-triphosphate = RNA(n+1) + diphosphate. DNA-dependent RNA polymerase catalyzes the transcription of DNA into RNA using the four ribonucleoside triphosphates as substrates. This Aethionema grandiflorum (Persian stone-cress) protein is DNA-directed RNA polymerase subunit beta.